Here is a 1250-residue protein sequence, read N- to C-terminus: TBC1 domain family member 9B (1250 aa).

2 consecutive GRAM domains span residues 142-209 (LKMR…EKNA) and 288-356 (ECYR…EKAD). The residue at position 397 (Thr-397) is a Phosphothreonine. The tract at residues 397-443 (TPSKQPGSIGSRKASVVDPSTESSPAPQEGSEQPASPASPLSSRQSF) is disordered. A phosphoserine mark is found at Ser-411, Ser-432, Ser-435, and Ser-463. A compositionally biased stretch (polar residues) spans 414–443 (DPSTESSPAPQEGSEQPASPASPLSSRQSF). The region spanning 508-695 (GIPESLRGEL…VIVDCFFYEG (188 aa)) is the Rab-GAP TBC domain. The helical transmembrane segment at 668-688 (LSWFLTLFLSVMPFESAVVIV) threads the bilayer. The EF-hand domain occupies 879–914 (HTPLLAGRMFRLLDENKDSLINFKEFVTGMSGMYHG). 3 disordered regions span residues 974–999 (LPQE…PDYR), 1069–1093 (SART…ELHQ), and 1128–1157 (VEGG…MSSY). The span at 984-999 (SEERGEEKGTSSPDYR) shows a compositional bias: basic and acidic residues. Phosphoserine is present on Ser-1241.

It is found in the membrane. May act as a GTPase-activating protein for Rab family protein(s). This chain is TBC1 domain family member 9B (TBC1D9B), found in Homo sapiens (Human).